We begin with the raw amino-acid sequence, 101 residues long: MSISSAVDQYTVLTGDRSKIKDLLCSRLTECGWRDEVRLMCRNILIEKGTNNSFTVEQLIAEVTPKARTLVPDAVKKELLMKIRTILTEIEEEADEPEDES.

The protein belongs to the ENY2 family. As to quaternary structure, component of the nuclear pore complex (NPC)-associated AMEX complex (anchoring and mRNA export complex), composed of at least e(y)2 and xmas-2. Component of the SAGA transcription coactivator-HAT complexes, at least composed of Ada2b, e(y)2, Pcaf/Gcn5, Taf10 and Nipped-A/Trrap. Within the SAGA complex, e(y)2, Sgf11, and not/nonstop form an additional subcomplex of SAGA called the DUB module (deubiquitination module). Component of the THO complex, composed of at least e(y)2, HPR1, THO2, THOC5, THOC6 and THOC7. Interacts with e(y)1. Interacts with su(Hw) (via zinc fingers). Interacts with xmas-2; required for localization to the nuclear periphery. Interacts with the nuclear pore complex (NPC).

The protein localises to the nucleus. It localises to the nucleoplasm. The protein resides in the cytoplasm. Functionally, involved in mRNA export coupled transcription activation by association with both the AMEX and the SAGA complexes. The SAGA complex is a multiprotein complex that activates transcription by remodeling chromatin and mediating histone acetylation and deubiquitination. Within the SAGA complex, participates in a subcomplex that specifically deubiquitinates histone H2B. The SAGA complex is recruited to specific gene promoters by activators, where it is required for transcription. Required for nuclear receptor-mediated transactivation. Involved in transcription elongation by recruiting the THO complex onto nascent mRNA. The AMEX complex functions in docking export-competent ribonucleoprotein particles (mRNPs) to the nuclear entrance of the nuclear pore complex (nuclear basket). AMEX participates in mRNA export and accurate chromatin positioning in the nucleus by tethering genes to the nuclear periphery. This chain is Enhancer of yellow 2 transcription factor, found in Drosophila sechellia (Fruit fly).